A 76-amino-acid polypeptide reads, in one-letter code: Exodeoxyribonuclease 7 small subunit (76 aa).

This sequence belongs to the XseB family. As to quaternary structure, heterooligomer composed of large and small subunits.

The protein localises to the cytoplasm. It carries out the reaction Exonucleolytic cleavage in either 5'- to 3'- or 3'- to 5'-direction to yield nucleoside 5'-phosphates.. Bidirectionally degrades single-stranded DNA into large acid-insoluble oligonucleotides, which are then degraded further into small acid-soluble oligonucleotides. The polypeptide is Exodeoxyribonuclease 7 small subunit (Staphylococcus aureus (strain MRSA252)).